A 373-amino-acid chain; its full sequence is UBX domain-containing protein 1 (373 aa).

Disordered stretches follow at residues 39-179 (VTEF…QIPR) and 236-293 (IKQH…VDES). Residues 49 to 59 (TAGSSEPTGQP) are compositionally biased toward polar residues. 2 stretches are compositionally biased toward low complexity: residues 60–71 (SAKSSSSTPRES) and 85–94 (LGDLASGAAD). The span at 95 to 104 (SSDDDDDENQ) shows a compositional bias: acidic residues. A compositionally biased stretch (basic and acidic residues) spans 121-132 (DDLKKKIIEKAR). In terms of domain architecture, SEP spans 185 to 258 (LHFWADGFSV…KYQPFAGKGQ (74 aa)). One can recognise a UBX domain in the interval 292 to 369 (ESQPVVTLQI…PEFKRGGVVV (78 aa)).

Functionally, involved in CDC48-dependent protein degradation through the ubiquitin/proteasome pathway. This chain is UBX domain-containing protein 1 (ubx1), found in Emericella nidulans (strain FGSC A4 / ATCC 38163 / CBS 112.46 / NRRL 194 / M139) (Aspergillus nidulans).